A 176-amino-acid polypeptide reads, in one-letter code: Translation initiation factor IF-3 (176 aa).

This sequence belongs to the IF-3 family. Monomer.

Its subcellular location is the cytoplasm. Its function is as follows. IF-3 binds to the 30S ribosomal subunit and shifts the equilibrium between 70S ribosomes and their 50S and 30S subunits in favor of the free subunits, thus enhancing the availability of 30S subunits on which protein synthesis initiation begins. The polypeptide is Translation initiation factor IF-3 (Wolinella succinogenes (strain ATCC 29543 / DSM 1740 / CCUG 13145 / JCM 31913 / LMG 7466 / NCTC 11488 / FDC 602W) (Vibrio succinogenes)).